The chain runs to 487 residues: N-succinylglutamate 5-semialdehyde dehydrogenase (487 aa).

Position 221–226 (221–226 (GSSDTG)) interacts with NAD(+). Residues Glu-244 and Cys-278 contribute to the active site.

This sequence belongs to the aldehyde dehydrogenase family. AstD subfamily.

The enzyme catalyses N-succinyl-L-glutamate 5-semialdehyde + NAD(+) + H2O = N-succinyl-L-glutamate + NADH + 2 H(+). It participates in amino-acid degradation; L-arginine degradation via AST pathway; L-glutamate and succinate from L-arginine: step 4/5. In terms of biological role, catalyzes the NAD-dependent reduction of succinylglutamate semialdehyde into succinylglutamate. This Burkholderia pseudomallei (strain 1106a) protein is N-succinylglutamate 5-semialdehyde dehydrogenase.